Here is a 68-residue protein sequence, read N- to C-terminus: Small ribosomal subunit protein bS21 (68 aa).

The segment at 39-68 (PPSVKRVRKKQESERRHRKERAMRRRMMEE) is disordered. Over residues 54–68 (RHRKERAMRRRMMEE) the composition is skewed to basic residues.

The protein belongs to the bacterial ribosomal protein bS21 family.

This Orientia tsutsugamushi (strain Boryong) (Rickettsia tsutsugamushi) protein is Small ribosomal subunit protein bS21.